A 235-amino-acid chain; its full sequence is MSIEVVEVKPHERHYGVYVVKFEDGTERIATKNLTPGRRVYGERLIKWGGDEYREWNPYRSKLAAAILNGLKLVPIKEGTHILYLGAASGTTPSHISDIVGENGLIYSVEFSPRVFREFMEKLVDQGRRNVVPILGDARFPYQYAHYVKGVDVVYIDVAQPAQAKILADNADYFLKPGGHVMLVIKAMSIDVTAPATETFKQEINTLKERGFDILETVHLEPYDTAHAMVIAKKR.

S-adenosyl-L-methionine is bound by residues 91-92 (TT), 110-111 (EF), 137-138 (DA), and 157-160 (DVAQ).

This sequence belongs to the methyltransferase superfamily. Fibrillarin family. In terms of assembly, interacts with nop5. Component of box C/D small ribonucleoprotein (sRNP) particles that contain rpl7ae, FlpA and nop5, plus a guide RNA.

Involved in pre-rRNA and tRNA processing. Utilizes the methyl donor S-adenosyl-L-methionine to catalyze the site-specific 2'-hydroxyl methylation of ribose moieties in rRNA and tRNA. Site specificity is provided by a guide RNA that base pairs with the substrate. Methylation occurs at a characteristic distance from the sequence involved in base pairing with the guide RNA. The sequence is that of Fibrillarin-like rRNA/tRNA 2'-O-methyltransferase from Pyrobaculum aerophilum (strain ATCC 51768 / DSM 7523 / JCM 9630 / CIP 104966 / NBRC 100827 / IM2).